Here is a 1402-residue protein sequence, read N- to C-terminus: DNA-directed RNA polymerase subunit beta' (1402 aa).

Zn(2+) is bound by residues cysteine 70, cysteine 72, cysteine 85, and cysteine 88. Mg(2+)-binding residues include aspartate 460, aspartate 462, and aspartate 464. Zn(2+) is bound by residues cysteine 812, cysteine 886, cysteine 893, and cysteine 896. The interval 1373-1402 is disordered; sequence DRFLNGSASSNEKSRSAGVLEATDEESAGD.

It belongs to the RNA polymerase beta' chain family. The RNAP catalytic core consists of 2 alpha, 1 beta, 1 beta' and 1 omega subunit. When a sigma factor is associated with the core the holoenzyme is formed, which can initiate transcription. Mg(2+) serves as cofactor. It depends on Zn(2+) as a cofactor.

The catalysed reaction is RNA(n) + a ribonucleoside 5'-triphosphate = RNA(n+1) + diphosphate. In terms of biological role, DNA-dependent RNA polymerase catalyzes the transcription of DNA into RNA using the four ribonucleoside triphosphates as substrates. This is DNA-directed RNA polymerase subunit beta' from Dichelobacter nodosus (strain VCS1703A).